The sequence spans 116 residues: uncharacterized protein (116 aa).

The helical transmembrane segment at 52–72 threads the bilayer; it reads VFCSANSVPLYLLLLTSALHF.

It localises to the mitochondrion membrane. This is an uncharacterized protein from Arabidopsis thaliana (Mouse-ear cress).